Reading from the N-terminus, the 251-residue chain is Flap endonuclease Xni (251 aa).

Aspartate 104 contacts Mg(2+). The 5'-3' exonuclease domain maps to 160–250; it reads VLPRQLPDYW…SGNLQQLRLK (91 aa). K(+)-binding residues include leucine 171, alanine 172, proline 180, valine 182, and valine 185. The tract at residues 184–189 is interaction with DNA; the sequence is GVGAKT.

It belongs to the Xni family. Requires Mg(2+) as cofactor. K(+) is required as a cofactor.

In terms of biological role, has flap endonuclease activity. During DNA replication, flap endonucleases cleave the 5'-overhanging flap structure that is generated by displacement synthesis when DNA polymerase encounters the 5'-end of a downstream Okazaki fragment. This Yersinia pseudotuberculosis serotype I (strain IP32953) protein is Flap endonuclease Xni.